A 205-amino-acid chain; its full sequence is dTTP/UTP pyrophosphatase (205 aa).

Aspartate 71 serves as the catalytic Proton acceptor.

It belongs to the Maf family. YhdE subfamily. A divalent metal cation serves as cofactor.

The protein localises to the cytoplasm. It carries out the reaction dTTP + H2O = dTMP + diphosphate + H(+). It catalyses the reaction UTP + H2O = UMP + diphosphate + H(+). In terms of biological role, nucleoside triphosphate pyrophosphatase that hydrolyzes dTTP and UTP. May have a dual role in cell division arrest and in preventing the incorporation of modified nucleotides into cellular nucleic acids. The polypeptide is dTTP/UTP pyrophosphatase (Syntrophus aciditrophicus (strain SB)).